A 278-amino-acid polypeptide reads, in one-letter code: Small ribosomal subunit protein uS3 (278 aa).

Residues 38–106 enclose the KH type-2 domain; the sequence is IRKLLATGLE…QVQLNILEVK (69 aa). A disordered region spans residues 215–278; the sequence is AAAAPAGADR…AAGQPETTES (64 aa). Low complexity predominate over residues 238-278; the sequence is SGASGTTATSTDAGRAATEEAPATDAAATAPAAGQPETTES.

The protein belongs to the universal ribosomal protein uS3 family. In terms of assembly, part of the 30S ribosomal subunit. Forms a tight complex with proteins S10 and S14.

In terms of biological role, binds the lower part of the 30S subunit head. Binds mRNA in the 70S ribosome, positioning it for translation. This Mycolicibacterium gilvum (strain PYR-GCK) (Mycobacterium gilvum (strain PYR-GCK)) protein is Small ribosomal subunit protein uS3.